The following is a 378-amino-acid chain: Protein RecA (378 aa).

An ATP-binding site is contributed by 79–86 (GPESSGKT).

The protein belongs to the RecA family.

The protein resides in the cytoplasm. Can catalyze the hydrolysis of ATP in the presence of single-stranded DNA, the ATP-dependent uptake of single-stranded DNA by duplex DNA, and the ATP-dependent hybridization of homologous single-stranded DNAs. It interacts with LexA causing its activation and leading to its autocatalytic cleavage. This is Protein RecA from Streptococcus equi subsp. zooepidemicus (strain H70).